The sequence spans 106 residues: ATP-dependent Clp protease adapter protein ClpS (106 aa).

This sequence belongs to the ClpS family. Binds to the N-terminal domain of the chaperone ClpA.

In terms of biological role, involved in the modulation of the specificity of the ClpAP-mediated ATP-dependent protein degradation. The protein is ATP-dependent Clp protease adapter protein ClpS of Vibrio parahaemolyticus serotype O3:K6 (strain RIMD 2210633).